A 1036-amino-acid chain; its full sequence is Pre-mRNA-processing factor 39-2 (1036 aa).

The segment at 1–24 is disordered; the sequence is MVTTEVRTAVSDKEPLQRSPELDS. HAT repeat units follow at residues 62–94, 96–128, 131–166, 168–201, 278–310, and 312–344; these read DDIE…HKIK, CTLE…FAVA, EDPH…YLLG, QQWS…IAAS, CFET…FGET, and GDFD…FVES. 3 disordered regions span residues 595 to 618, 714 to 767, and 995 to 1036; these read GISS…YGTQ, PSGS…PVGT, and KGDE…ISSI. Residues 714–726 are compositionally biased toward low complexity; it reads PSGSQSPQSYQSQ. Positions 740–755 are enriched in basic and acidic residues; it reads RDLNQMHRDSKPRSQE. The segment covering 1002–1036 has biased composition (polar residues); the sequence is SMPQGSTTNSDIQKSQESGAVNEANLSSDTSISSI.

It belongs to the PRP39 family.

Its subcellular location is the nucleus. Functionally, involved in pre-mRNA splicing. The polypeptide is Pre-mRNA-processing factor 39-2 (Arabidopsis thaliana (Mouse-ear cress)).